The chain runs to 82 residues: Toxin NaTx-13 (82 aa).

The region spanning 6-70 (PGGYPVNQFK…KNSIEVFSCG (65 aa)) is the LCN-type CS-alpha/beta domain. 4 disulfides stabilise this stretch: cysteine 16-cysteine 69, cysteine 20-cysteine 44, cysteine 30-cysteine 49, and cysteine 34-cysteine 51.

The protein belongs to the long (4 C-C) scorpion toxin superfamily. Sodium channel inhibitor family. In terms of tissue distribution, expressed by the venom gland.

It is found in the secreted. Functionally, probable sodium channel inhibitor. This is Toxin NaTx-13 from Centruroides sculpturatus (Arizona bark scorpion).